We begin with the raw amino-acid sequence, 526 residues long: Glucose-6-phosphate isomerase (526 aa).

The Proton donor role is filled by Glu320. Catalysis depends on residues His349 and Lys453.

This sequence belongs to the GPI family.

Its subcellular location is the cytoplasm. The catalysed reaction is alpha-D-glucose 6-phosphate = beta-D-fructose 6-phosphate. Its pathway is carbohydrate biosynthesis; gluconeogenesis. The protein operates within carbohydrate degradation; glycolysis; D-glyceraldehyde 3-phosphate and glycerone phosphate from D-glucose: step 2/4. Functionally, catalyzes the reversible isomerization of glucose-6-phosphate to fructose-6-phosphate. The chain is Glucose-6-phosphate isomerase from Gloeothece citriformis (strain PCC 7424) (Cyanothece sp. (strain PCC 7424)).